A 226-amino-acid chain; its full sequence is ATP synthase F(0) complex subunit a (226 aa).

A run of 6 helical transmembrane segments spans residues 6 to 26 (FAPF…IITF), 68 to 88 (WTLM…LGLL), 97 to 117 (QLSM…IMGF), 138 to 158 (IPML…ALAV), 164 to 184 (ITAG…LSSI), and 195 to 215 (ILFL…YVFT).

Belongs to the ATPase A chain family. In terms of assembly, component of the ATP synthase complex composed at least of ATP5F1A/subunit alpha, ATP5F1B/subunit beta, ATP5MC1/subunit c (homooctomer), MT-ATP6/subunit a, MT-ATP8/subunit 8, ATP5ME/subunit e, ATP5MF/subunit f, ATP5MG/subunit g, ATP5MK/subunit k, ATP5MJ/subunit j, ATP5F1C/subunit gamma, ATP5F1D/subunit delta, ATP5F1E/subunit epsilon, ATP5PF/subunit F6, ATP5PB/subunit b, ATP5PD/subunit d, ATP5PO/subunit OSCP. ATP synthase complex consists of a soluble F(1) head domain (subunits alpha(3) and beta(3)) - the catalytic core - and a membrane F(0) domain - the membrane proton channel (subunits c, a, 8, e, f, g, k and j). These two domains are linked by a central stalk (subunits gamma, delta, and epsilon) rotating inside the F1 region and a stationary peripheral stalk (subunits F6, b, d, and OSCP). Interacts with DNAJC30; interaction is direct.

Its subcellular location is the mitochondrion inner membrane. The catalysed reaction is H(+)(in) = H(+)(out). In terms of biological role, subunit a, of the mitochondrial membrane ATP synthase complex (F(1)F(0) ATP synthase or Complex V) that produces ATP from ADP in the presence of a proton gradient across the membrane which is generated by electron transport complexes of the respiratory chain. ATP synthase complex consist of a soluble F(1) head domain - the catalytic core - and a membrane F(1) domain - the membrane proton channel. These two domains are linked by a central stalk rotating inside the F(1) region and a stationary peripheral stalk. During catalysis, ATP synthesis in the catalytic domain of F(1) is coupled via a rotary mechanism of the central stalk subunits to proton translocation. With the subunit c (ATP5MC1), forms the proton-conducting channel in the F(0) domain, that contains two crucial half-channels (inlet and outlet) that facilitate proton movement from the mitochondrial intermembrane space (IMS) into the matrix. Protons are taken up via the inlet half-channel and released through the outlet half-channel, following a Grotthuss mechanism. The protein is ATP synthase F(0) complex subunit a of Didelphis virginiana (North American opossum).